Reading from the N-terminus, the 149-residue chain is Transcriptional repressor NrdR (149 aa).

Residues 3 to 34 (CPFCGNRDTNVRDSRSVNEGTFIKRRRFCGEC) fold into a zinc finger. The ATP-cone domain maps to 49-139 (IKVIKKNGSC…VYMNFENEKD (91 aa)).

This sequence belongs to the NrdR family. It depends on Zn(2+) as a cofactor.

Negatively regulates transcription of bacterial ribonucleotide reductase nrd genes and operons by binding to NrdR-boxes. This Neorickettsia sennetsu (strain ATCC VR-367 / Miyayama) (Ehrlichia sennetsu) protein is Transcriptional repressor NrdR.